Reading from the N-terminus, the 122-residue chain is MAEMTVELVAVERRLWSGSATLVSAQTTEGEIGVMPGHEPVLGQLVEAGVVAITTADGERIVAAVHGGFLSVTAKTVTILAESADLAEDIDVEAAKAVLAESGDDLEAIAVAKGRIRAVERA.

Belongs to the ATPase epsilon chain family. In terms of assembly, F-type ATPases have 2 components, CF(1) - the catalytic core - and CF(0) - the membrane proton channel. CF(1) has five subunits: alpha(3), beta(3), gamma(1), delta(1), epsilon(1). CF(0) has three main subunits: a, b and c.

The protein resides in the cell membrane. Produces ATP from ADP in the presence of a proton gradient across the membrane. This chain is ATP synthase epsilon chain, found in Rhodococcus jostii (strain RHA1).